Consider the following 338-residue polypeptide: Nicotinate-nucleotide--dimethylbenzimidazole phosphoribosyltransferase (338 aa).

Residue Glu-305 is the Proton acceptor of the active site.

It belongs to the CobT family.

The enzyme catalyses 5,6-dimethylbenzimidazole + nicotinate beta-D-ribonucleotide = alpha-ribazole 5'-phosphate + nicotinate + H(+). It functions in the pathway nucleoside biosynthesis; alpha-ribazole biosynthesis; alpha-ribazole from 5,6-dimethylbenzimidazole: step 1/2. Its function is as follows. Catalyzes the synthesis of alpha-ribazole-5'-phosphate from nicotinate mononucleotide (NAMN) and 5,6-dimethylbenzimidazole (DMB). The chain is Nicotinate-nucleotide--dimethylbenzimidazole phosphoribosyltransferase from Sinorhizobium fredii (strain NBRC 101917 / NGR234).